Reading from the N-terminus, the 502-residue chain is Regulator of hypoxia-inducible factor 1 (502 aa).

The next 11 helical transmembrane spans lie at 54 to 74 (LLAWMTLVVIGTLAPVSVFSC), 92 to 112 (LDVLDIFRFVAILWVMLNHTG), 138 to 158 (IFGALMGNSALGVEIFLVLSG), 188 to 208 (LAPSMFIFVYIAAGPIMNALL), 241 to 261 (MGYLWYLGLDMQLYMVAPIFL), 272 to 292 (MALTITTIIASMVIRAGYCTA), 335 to 355 (GPFLIGLLLGYITVSSKYIMV), 367 to 387 (LIVAIATIYAILPEYWNPNAG), 396 to 416 (TAVFRSVFAMAISGMIAALYF), 437 to 457 (AYLLHMPVVYIFNWLPFLQAA), and 465 to 485 (LVLPFVAILSFIAALIFYLFI).

In terms of tissue distribution, expressed in intestine, some sensory neurons in the head, body wall muscles and socket cells.

The protein localises to the endoplasmic reticulum membrane. Involved in the response to variation in environmental oxygen levels by inhibiting hif-1-mediated gene transcription in a vhl-1-independent manner. Plays a role in susceptibility to killing mediated by P.aeruginosa and by pore-forming toxins produced by B.thuringiensis. Probably by preventing hif-1 transcriptional activity, regulates behavioral responses, such as locomotion speed following acute reoxygenation. Plays a role in normal egg-laying probably by regulating spermatogenesis and in body morphogenesis. This is Regulator of hypoxia-inducible factor 1 from Caenorhabditis elegans.